The chain runs to 214 residues: Small ribosomal subunit protein uS5 (214 aa).

The region spanning 54 to 117 (LKYEVMDIKI…KNAKMNIIPV (64 aa)) is the S5 DRBM domain.

The protein belongs to the universal ribosomal protein uS5 family. As to quaternary structure, part of the 30S ribosomal subunit. Contacts protein S4.

Its function is as follows. With S4 and S12 plays an important role in translational accuracy. The sequence is that of Small ribosomal subunit protein uS5 from Sulfurisphaera tokodaii (strain DSM 16993 / JCM 10545 / NBRC 100140 / 7) (Sulfolobus tokodaii).